A 352-amino-acid polypeptide reads, in one-letter code: Protein RecA (352 aa).

An ATP-binding site is contributed by 67 to 74 (GPESSGKT).

Belongs to the RecA family.

It is found in the cytoplasm. In terms of biological role, can catalyze the hydrolysis of ATP in the presence of single-stranded DNA, the ATP-dependent uptake of single-stranded DNA by duplex DNA, and the ATP-dependent hybridization of homologous single-stranded DNAs. It interacts with LexA causing its activation and leading to its autocatalytic cleavage. The polypeptide is Protein RecA (Enterobacter sp. (strain 638)).